We begin with the raw amino-acid sequence, 21 residues long: C-phycocyanin alpha subunit (21 aa).

It belongs to the phycobiliprotein family. In terms of assembly, heterodimer of an alpha and a beta subunit, which further assembles into trimers and the trimers into hexamers. Contains one covalently linked bilin chromophore.

The protein resides in the cellular thylakoid membrane. Functionally, light-harvesting photosynthetic bile pigment-protein from the phycobiliprotein complex (phycobilisome, PBS). Phycocyanin is the major phycobiliprotein in the PBS rod. The protein is C-phycocyanin alpha subunit of Anabaena sp. (strain L31).